The primary structure comprises 254 residues: Ribonuclease HII (254 aa).

Positions 46-234 constitute an RNase H type-2 domain; that stretch reads KLIAGIDEVG…VWMASAPQEV (189 aa). Residues D52, E53, and D144 each coordinate a divalent metal cation.

It belongs to the RNase HII family. The cofactor is Mn(2+). Requires Mg(2+) as cofactor.

Its subcellular location is the cytoplasm. It carries out the reaction Endonucleolytic cleavage to 5'-phosphomonoester.. In terms of biological role, endonuclease that specifically degrades the RNA of RNA-DNA hybrids. The protein is Ribonuclease HII of Koribacter versatilis (strain Ellin345).